A 149-amino-acid chain; its full sequence is Secreted RxLR effector protein 17 (149 aa).

An N-terminal signal peptide occupies residues 1-24 (MRLFYFSAMSVIGLLARNNMVVVA). The short motif at 52-78 (RSLRTREKDIQDSTVAKDDAIKVEEDR) is the RxLR-dEER element.

The protein belongs to the RxLR effector family.

The protein localises to the secreted. The protein resides in the host cytoplasm. It is found in the host nucleus. Effector that acts as a broad suppressor of cell death to interrupt plant immunity. Inhibits cell death induced by cell death-inducing proteins, including the PAMP elicitor INF1 from P.infestans. The polypeptide is Secreted RxLR effector protein 17 (Plasmopara viticola (Downy mildew of grapevine)).